Reading from the N-terminus, the 718-residue chain is Cyclic-di-AMP phosphodiesterase PgpH (718 aa).

The Cytoplasmic portion of the chain corresponds to Met1–Lys17. The chain crosses the membrane as a helical span at residues Tyr18–Met38. At Thr39 to Pro289 the chain is on the extracellular side. The segment covering Gln112–Lys127 has biased composition (basic and acidic residues). The segment at Gln112 to Lys140 is disordered. Residues Val290–Tyr310 form a helical membrane-spanning segment. Residues Thr311 to Thr324 lie on the Cytoplasmic side of the membrane. A helical transmembrane segment spans residues Met325 to Leu345. Residues Glu346–Asn349 are Extracellular-facing. 2 consecutive transmembrane segments (helical) span residues Ile350–Leu370 and Asn371–Gln391. A topological domain (extracellular) is located at residue Asn392. A helical membrane pass occupies residues Asp393–Leu413. Topologically, residues Arg414 to Ala421 are cytoplasmic. The chain crosses the membrane as a helical span at residues Ile422–Leu442. Residues Ile443–Leu457 are Extracellular-facing. A helical membrane pass occupies residues Gly458–Phe478. Over Glu479–Asp718 the chain is Cytoplasmic. An HD domain is found at Thr511–Ala653. Mn(2+) contacts are provided by His514, His543, and Asp544. His514 is a substrate binding site. Residues Asp544–Lys547 and Val555–Glu556 contribute to the substrate site. Mn(2+) contacts are provided by His580, His604, and His605. Substrate contacts are provided by Tyr631 and Asp648. A Mn(2+)-binding site is contributed by Asp648.

The protein belongs to the PgpH phosphodiesterase family. Requires Mn(2+) as cofactor.

The protein localises to the cell membrane. It carries out the reaction 3',3'-c-di-AMP + H2O = 5'-O-phosphonoadenylyl-(3'-&gt;5')-adenosine + H(+). C-di-AMP hydrolysis inhibited by ppGpp, without altering c-di-AMP binding. Its function is as follows. A phosphodiesterase (PDE) that hydrolyzes cyclic di-3',5'-adenylate (c-di-AMP); there are at least 2 PDEs for c-di-AMP in this bacteria (this and pdeA), this may be the major PDE for growth in liquid culture. During host infection c-di-AMP is secreted into the host cytoplasm which leads to interferon-beta production and secretion by the host. The cytoplasmic HD domain binds and hydrolyzes c-di-AMP to 5'-pApA; has very low activity against c-di-GMP, does not hydrolyze ppGpp. The protein is Cyclic-di-AMP phosphodiesterase PgpH of Listeria monocytogenes serotype 1/2a (strain 10403S).